We begin with the raw amino-acid sequence, 283 residues long: NAD kinase (283 aa).

D67 functions as the Proton acceptor in the catalytic mechanism. NAD(+) is bound by residues 67 to 68, R72, 136 to 137, K147, R164, D166, 177 to 182, and Q236; these read DG, NE, and TAYSMS.

The protein belongs to the NAD kinase family. Requires a divalent metal cation as cofactor.

The protein localises to the cytoplasm. The enzyme catalyses NAD(+) + ATP = ADP + NADP(+) + H(+). Functionally, involved in the regulation of the intracellular balance of NAD and NADP, and is a key enzyme in the biosynthesis of NADP. Catalyzes specifically the phosphorylation on 2'-hydroxyl of the adenosine moiety of NAD to yield NADP. The protein is NAD kinase of Methanothermobacter thermautotrophicus (strain ATCC 29096 / DSM 1053 / JCM 10044 / NBRC 100330 / Delta H) (Methanobacterium thermoautotrophicum).